Reading from the N-terminus, the 137-residue chain is ATP synthase epsilon chain, chloroplastic (137 aa).

The protein belongs to the ATPase epsilon chain family. F-type ATPases have 2 components, CF(1) - the catalytic core - and CF(0) - the membrane proton channel. CF(1) has five subunits: alpha(3), beta(3), gamma(1), delta(1), epsilon(1). CF(0) has three main subunits: a, b and c.

It localises to the plastid. The protein localises to the chloroplast thylakoid membrane. Functionally, produces ATP from ADP in the presence of a proton gradient across the membrane. In Pinus thunbergii (Japanese black pine), this protein is ATP synthase epsilon chain, chloroplastic.